The primary structure comprises 350 residues: Phosphotriesterase-related protein (350 aa).

6 residues coordinate a divalent metal cation: His22, His24, Glu169, His201, His230, and Asp298.

The protein belongs to the metallo-dependent hydrolases superfamily. Phosphotriesterase family. The cofactor is a divalent metal cation.

The chain is Phosphotriesterase-related protein from Drosophila persimilis (Fruit fly).